A 504-amino-acid polypeptide reads, in one-letter code: Acetylcholine receptor subunit epsilon (504 aa).

An N-terminal signal peptide occupies residues M1 to A19. The Extracellular portion of the chain corresponds to S20–K240. N-linked (GlcNAc...) asparagine glycans are attached at residues N88 and N161. An intrachain disulfide couples C148 to C162. A helical transmembrane segment spans residues P241–L265. At P266–K273 the chain is on the cytoplasmic side. A helical membrane pass occupies residues C274 to A292. Residues Q293–K307 are Extracellular-facing. The chain crosses the membrane as a helical span at residues Y308 to V329. At S330–V473 the chain is on the cytoplasmic side. A helical membrane pass occupies residues L474 to N497. The Extracellular segment spans residues T498–F504.

The protein belongs to the ligand-gated ion channel (TC 1.A.9) family. Acetylcholine receptor (TC 1.A.9.1) subfamily. Epsilon/CHRNE sub-subfamily. Pentamer of two alpha chains, and one each of the beta, delta, and gamma (in immature muscle) or epsilon (in mature muscle) chains.

It localises to the postsynaptic cell membrane. Its subcellular location is the cell membrane. It catalyses the reaction K(+)(in) = K(+)(out). The catalysed reaction is Na(+)(in) = Na(+)(out). Functionally, after binding acetylcholine, the AChR responds by an extensive change in conformation that affects all subunits and leads to opening of an ion-conducting channel across the plasma membrane. The sequence is that of Acetylcholine receptor subunit epsilon (chrne) from Xenopus laevis (African clawed frog).